Consider the following 895-residue polypeptide: MNKHHPKLRSFYSIRKSTLGVASVIVSTLFLITSQHQAQAAENTNTSDKISENQNNNATTTQPPKDTNQTQPATQPANTAKNYPAADESLKDAIKDPALENKEHDIGPREQVNFQLLDKNNETQYYHFFSIKDPADVYYTKKKAEVELDINTASTWKKFEVYENNQKLPVRLVSYSPVPEDHAYIRFPVSDGTQELKIVSSTQIDDGEETNYDYTKLVFAKPIYNDPSLVKSDTNDAVVTNDQSSSVASNQTNTNTSNQNTSTINNANNQPQATTNMSQPAQPKSSTNADQASSQPAHETNSNGNTNDKTNESSNQSDVNQQYPPADESLQDAIKNPAIIDKEHTADNWRPIDFQMKNDKGERQFYHYASTVEPATVIFTKTGPIIELGLKTASTWKKFEVYEGDKKLPVELVSYDSDKDYAYIRFPVSNGTREVKIVSSIEYGENIHEDYDYTLMVFAQPITNNPDDYVDEETYNLQKLLAPYHKAKTLERQVYELEKLQEKLPEKYKAEYKKKLDQTRVELADQVKSAVTEFENVTPTNDQLTDLQEAHFVVFESEENSESVMDGFVEHPFYTATLNGQKYVVMKTKDDSYWKDLIVEGKRVTTVSKDPKNNSRTLIFPYIPDKAVYNAIVKVVVANIGYEGQYHVRIINQDINTKDDDTSQNNTSEPLNVQTGQEGKVADTDVAENSSTATNPKDASDKADVIEPESDVVKDADNNIDKDVQHDVDHLSDMSDNNHFDKYDLKEMDTQIAKDTDRNVDKDADNSVGMSSNVDTDKDSNKNKDKVIQLNHIADKNNHTGKAAKLDVVKQNYNNTDKVTDKKTTEHLPSDIHKTVDKTVKTKEKAGTPSKENKLSQSKMLPKTGETTSSQSWWGLYALLGMLALFIPKFRKESK.

Residues 1 to 40 form the signal peptide; the sequence is MNKHHPKLRSFYSIRKSTLGVASVIVSTLFLITSQHQAQA. Residues 42–85 form a disordered region; sequence ENTNTSDKISENQNNNATTTQPPKDTNQTQPATQPANTAKNYPA. Over residues 53 to 62 the composition is skewed to low complexity; the sequence is NQNNNATTTQ. The segment covering 63–81 has biased composition (polar residues); the sequence is PPKDTNQTQPATQPANTAK. In terms of domain architecture, NEAT 1 spans 105-232; sequence DIGPREQVNF…IYNDPSLVKS (128 aa). Positions 241-324 are disordered; sequence NDQSSSVASN…NQSDVNQQYP (84 aa). Residues 243 to 276 show a composition bias toward low complexity; sequence QSSSVASNQTNTNTSNQNTSTINNANNQPQATTN. The span at 277–323 shows a compositional bias: polar residues; sequence MSQPAQPKSSTNADQASSQPAHETNSNGNTNDKTNESSNQSDVNQQY. NEAT domains lie at 345-471 and 543-660; these read TADN…DYVD and QLTD…TKDD. Disordered regions lie at residues 657–720, 751–782, and 841–868; these read TKDD…DNNI, QIAK…DSNK, and KTKE…GETT. Polar residues-rich tracts occupy residues 663–677 and 687–697; these read SQNN…QTGQ and AENSSTATNPK. 3 stretches are compositionally biased toward basic and acidic residues: residues 698-720, 751-765, and 841-854; these read DASD…DNNI, QIAK…KDAD, and KTKE…KENK. Over residues 855–868 the composition is skewed to polar residues; it reads LSQSKMLPKTGETT. Positions 861–865 match the LPXTG sorting signal motif; the sequence is LPKTG. Threonine 864 bears the Pentaglycyl murein peptidoglycan amidated threonine mark. The propeptide at 865–895 is removed by sortase; it reads GETTSSQSWWGLYALLGMLALFIPKFRKESK.

Belongs to the IsdH family.

The protein resides in the secreted. It localises to the cell wall. Functionally, binds human plasma haptoglobin-hemoglobin complexes, haptoglobin and hemoglobin. Binds haptoglobin-hemoglobin complexes with significantly higher affinity than haptoglobin alone. The protein is Iron-regulated surface determinant protein H (isdH) of Staphylococcus aureus (strain COL).